Consider the following 841-residue polypeptide: Beta-adaptin-like protein A (841 aa).

2 disordered regions span residues 1–25 and 650–671; these read MAPP…VSDL and DENK…LESS. Composition is skewed to polar residues over residues 9–25 and 654–671; these read RYPS…VSDL and GVSN…LESS.

It belongs to the adaptor complexes large subunit family. As to quaternary structure, adaptor protein complexes are heterotetramers composed of two large adaptins (beta-type subunit and alpha-type or delta-type or epsilon-type or gamma-type subunit), a medium adaptin (mu-type subunit) and a small adaptin (sigma-type subunit). Interacts with AHK2.

It is found in the golgi apparatus. Its subcellular location is the trans-Golgi network. The protein resides in the cytoplasmic vesicle. The protein localises to the clathrin-coated vesicle membrane. In terms of biological role, subunit of clathrin-associated adaptor protein complex that plays a role in protein sorting in the late-Golgi/trans-Golgi network (TGN) and/or endosomes. The AP complexes mediate both the recruitment of clathrin to membranes and the recognition of sorting signals within the cytosolic tails of transmembrane cargo molecules. The polypeptide is Beta-adaptin-like protein A (BETAA-AD) (Arabidopsis thaliana (Mouse-ear cress)).